The following is a 560-amino-acid chain: Cytosolic purine 5'-nucleotidase (560 aa).

Aspartate 52 (nucleophile) is an active-site residue. Residues aspartate 52 and aspartate 54 each coordinate IMP. Positions 52 and 54 each coordinate Mg(2+). Aspartate 54 functions as the Proton donor in the catalytic mechanism. ATP contacts are provided by arginine 144 and asparagine 154. Residues arginine 202, aspartate 206, lysine 215, threonine 249, asparagine 250, serine 251, and lysine 292 each coordinate IMP. Aspartate 351 contacts Mg(2+). Serine 418 carries the phosphoserine modification. ATP-binding residues include glutamine 453 and arginine 456. 3 positions are modified to phosphoserine: serine 502, serine 511, and serine 527. The disordered stretch occupies residues 541-560 (PQEITHCHDEDDDEEEEEEE). The tract at residues 548–560 (HDEDDDEEEEEEE) is required for tetramer assembly. The segment covering 550–560 (EDDDEEEEEEE) has biased composition (acidic residues).

It belongs to the 5'(3')-deoxyribonucleotidase family. Homotetramer. Mg(2+) serves as cofactor.

The protein localises to the cytoplasm. Its subcellular location is the cytosol. The catalysed reaction is a ribonucleoside 5'-phosphate + H2O = a ribonucleoside + phosphate. It carries out the reaction a 2'-deoxyribonucleoside + a ribonucleoside 5'-phosphate = a ribonucleoside + a 2'-deoxyribonucleoside 5'-phosphate. It catalyses the reaction IMP + H2O = inosine + phosphate. The enzyme catalyses GMP + H2O = guanosine + phosphate. The catalysed reaction is dGMP + H2O = 2'-deoxyguanosine + phosphate. It carries out the reaction dIMP + H2O = 2'-deoxyinosine + phosphate. It catalyses the reaction XMP + H2O = xanthosine + phosphate. The enzyme catalyses inosine + GMP = guanosine + IMP. The catalysed reaction is dGMP + inosine = 2'-deoxyguanosine + IMP. It carries out the reaction dIMP + inosine = 2'-deoxyinosine + IMP. It catalyses the reaction inosine + UMP = uridine + IMP. The enzyme catalyses inosine + CMP = cytidine + IMP. The catalysed reaction is inosine + AMP = IMP + adenosine. With respect to regulation, allosterically activated by various compounds including ATP, 2,3-BPG/2,3-Bisphosphoglyceric acid and Ap4A/P1,P4-bis(5'-adenosyl) tetraphosphate. Binding of an allosteric activator is a prerequisiste to magnesium and substrate binding. Inhibited by inorganic phosphate. In terms of biological role, broad specificity cytosolic 5'-nucleotidase that catalyzes the dephosphorylation of 6-hydroxypurine nucleoside 5'-monophosphates. In addition, possesses a phosphotransferase activity by which it can transfer a phosphate from a donor nucleoside monophosphate to an acceptor nucleoside, preferably inosine, deoxyinosine and guanosine. Has the highest activities for IMP and GMP followed by dIMP, dGMP and XMP. Could also catalyze the transfer of phosphates from pyrimidine monophosphates but with lower efficiency. Through these activities regulates the purine nucleoside/nucleotide pools within the cell. This Mus musculus (Mouse) protein is Cytosolic purine 5'-nucleotidase.